The chain runs to 311 residues: MQPPGGDAPAGCPFSGARAAQPAQAAHEAPHVPGEADAQAGWHNAQLDFSKSMSYGDYLSLNSILDAQHPLSPDHNEMLFIIQHQTSELWMKLALFELRGALDAVRTDALPPAFKMLARVSRILEQLVQAWNVLSTMTPSEYSAMRPYLGQSSGFQSYQYRQLEFLLGNKNAQMLQPHAHRPDILEQVRATLEAPSFYDEVVRLLARRGFPIAAERLERDWTQPTRHDETVEAAWLEVYRHPQQHWELYEMAEELVDLEDAFRQWRFRHVTTVERIIGFKQGTGGTSGAPYLRKMLDVVLFPELWHVRTTL.

The interval 1–37 is disordered; sequence MQPPGGDAPAGCPFSGARAAQPAQAAHEAPHVPGEAD. Residues 17–27 show a composition bias toward low complexity; that stretch reads ARAAQPAQAAH. Substrate contacts are provided by residues 80–84, Y142, and R146; that span reads FIIQH. A heme-binding site is contributed by H269. T283 contacts substrate.

It belongs to the tryptophan 2,3-dioxygenase family. In terms of assembly, homotetramer. Heme is required as a cofactor.

It catalyses the reaction L-tryptophan + O2 = N-formyl-L-kynurenine. It participates in amino-acid degradation; L-tryptophan degradation via kynurenine pathway; L-kynurenine from L-tryptophan: step 1/2. Functionally, heme-dependent dioxygenase that catalyzes the oxidative cleavage of the L-tryptophan (L-Trp) pyrrole ring and converts L-tryptophan to N-formyl-L-kynurenine. Catalyzes the oxidative cleavage of the indole moiety. This is Tryptophan 2,3-dioxygenase from Burkholderia orbicola (strain MC0-3).